A 550-amino-acid chain; its full sequence is Sterol O-acyltransferase 1 (550 aa).

Met-1 is modified (N-acetylmethionine). Residues 1–36 form a disordered region; it reads MVGEEKMSLRNRLSKSRENPEEDEDQRKPAKESLEA. The Cytoplasmic segment spans residues 1-138; the sequence is MVGEEKMSLR…LDELLEVDHI (138 aa). A Phosphoserine modification is found at Ser-8. The segment covering 15-34 has biased composition (basic and acidic residues); the sequence is KSRENPEEDEDQRKPAKESL. A cholesterol-binding site is contributed by His-137. The chain crosses the membrane as a helical span at residues 139 to 160; sequence RTIYHMFIALLILFILSTLVVD. At 161–180 the chain is on the lumenal side; that stretch reads YIDEGRLVLEFSLLSYAFGK. A helical membrane pass occupies residues 181-206; that stretch reads FPTVVWTWWIMFLSTFSVPYFLFQRW. The Cytoplasmic segment spans residues 207–218; sequence ATGYSKSSHPLI. The chain crosses the membrane as a helical span at residues 219 to 244; that stretch reads NSLFHGFLFMVFQIGILGFGPTYVVL. At 245–252 the chain is on the lumenal side; it reads AYTLPPAS. The helical transmembrane segment at 253–276 threads the bilayer; that stretch reads RFIIIFEQIRFVMKAHSFVRENVP. At 277–319 the chain is on the cytoplasmic side; sequence RVLNSAKEKSSTVPIPTVNQYLYFLFAPTLIYRDSYPRNPTVR. Residues 320–352 form a helical membrane-spanning segment; it reads WGYVAMQFAQVFGCFFYVYYIFERLCAPLFRNI. At 353–369 the chain is on the lumenal side; that stretch reads KQEPFSARVLVLCVFNS. A helical membrane pass occupies residues 370-395; sequence ILPGVLILFLTFFAFLHCWLNAFAEM. Topologically, residues 396–443 are cytoplasmic; it reads LRFGDRMFYKDWWNSTSYSNYYRTWNVVVHDWLYYYAYKDFLWFFSKR. Positions 403–409 match the FYXDWWN motif motif; that stretch reads FYKDWWN. An acyl-CoA-binding residues include Asn-415, Arg-418, Asn-421, His-425, Tyr-433, Lys-445, and Ser-456. The chain crosses the membrane as a helical span at residues 444-468; the sequence is FKSAAMLAAFAVSAVVHEYALAVCL. Residue His-460 is part of the active site. At 469-474 the chain is on the lumenal side; it reads SFFYPV. Residues 475-490 form a helical membrane-spanning segment; sequence LFVLFMFFGMAFNFIV. Residues 491–496 are Cytoplasmic-facing; that stretch reads NDSRKK. The helical transmembrane segment at 497–528 threads the bilayer; that stretch reads PIWNVMMWTSLFLGNGVLLCFYSQEWYARQHC. The cysteines at positions 528 and 546 are disulfide-linked. Topologically, residues 529-550 are lumenal; the sequence is PLKNPTFLDYVRPRSWTCRYVF.

It belongs to the membrane-bound acyltransferase family. Sterol o-acyltransferase subfamily. May form homo- or heterodimers. Interacts with UBIAD1. In terms of tissue distribution, expressed in most tissues, but most strongly in the adrenal gland. Expressed more strongly in liver Kupffer cells than in hepatocytes.

The protein resides in the endoplasmic reticulum membrane. The catalysed reaction is a sterol + a long-chain fatty acyl-CoA = a long-chain 3-hydroxysterol ester + CoA. It carries out the reaction cholesterol + an acyl-CoA = a cholesterol ester + CoA. The enzyme catalyses cholesterol + (9Z)-octadecenoyl-CoA = cholesteryl (9Z-octadecenoate) + CoA. It catalyses the reaction cholesterol + hexadecanoyl-CoA = cholesteryl hexadecanoate + CoA. The catalysed reaction is octadecanoyl-CoA + cholesterol = cholesteryl octadecanoate + CoA. It carries out the reaction (9Z,12Z)-octadecadienoyl-CoA + cholesterol = cholesteryl (9Z,12Z)-octadecadienoate + CoA. The enzyme catalyses (5Z,8Z,11Z,14Z)-eicosatetraenoyl-CoA + cholesterol = cholesteryl (5Z,8Z,11Z,14Z)-eicosatetraenoate + CoA. It catalyses the reaction (9Z)-hexadecenoyl-CoA + cholesterol = cholesteryl (9Z)-hexadecenoate + CoA. The catalysed reaction is (11Z)-octadecenoyl-CoA + cholesterol = cholesteryl (11Z)-octadecenoate + CoA. It carries out the reaction (7Z)-octadecenoyl-CoA + cholesterol = cholesteryl (7Z)-octadecenoate + CoA. In terms of biological role, catalyzes the formation of fatty acid-cholesterol esters, which are less soluble in membranes than cholesterol. Plays a role in lipoprotein assembly and dietary cholesterol absorption. Preferentially utilizes oleoyl-CoA ((9Z)-octadecenoyl-CoA) as a substrate: shows a higher activity towards an acyl-CoA substrate with a double bond at the delta-9 position (9Z) than towards saturated acyl-CoA or an unsaturated acyl-CoA with a double bond at the delta-7 (7Z) or delta-11 (11Z) positions. The chain is Sterol O-acyltransferase 1 (SOAT1) from Macaca fascicularis (Crab-eating macaque).